Here is a 69-residue protein sequence, read N- to C-terminus: Large ribosomal subunit protein bL31 (69 aa).

The Zn(2+) site is built by Cys-17, Cys-19, Cys-37, and Cys-40.

It belongs to the bacterial ribosomal protein bL31 family. Type A subfamily. In terms of assembly, part of the 50S ribosomal subunit. It depends on Zn(2+) as a cofactor.

Functionally, binds the 23S rRNA. This Clostridium novyi (strain NT) protein is Large ribosomal subunit protein bL31.